Reading from the N-terminus, the 414-residue chain is MLVIEDVRAYEVLDSRGNPTVKAEVTLSDGSVGAAIVPSGASTGSKEALELRDNDERFGGKGVLKAVANVNETIADEILGLDAFNQTQLDDTLRELDGTNNYSNLGANATLGVSMATARAAAAALGMPLYRYLGGANASILPVPMCNIINGGAHANNNVDFQEFMIMPFGFTSFKEALRSVCEIYAILKKELANSGHSTALGDEGGFAPNLANNTEPIDLLMTCIKKAGYENRVKIALDVASTEFFKDGKYHMEGKAFSSEDLIERYVELCAKYPICSIEDGLAENDFEGWIKLTEKLGNKIQLVGDDLFVTNEDILREGIIKKMANAVLIKPNQIGTITQTMRTVRLAQRNNYKCVMSHRSGESEDAFIADFAVALNTGQIKTGALARGERTAKYNRLLEIELESDEYLGEKL.

Q162 contributes to the (2R)-2-phosphoglycerate binding site. The active-site Proton donor is the E204. Residues D239, E280, and D307 each coordinate Mg(2+). K332, R361, S362, and K383 together coordinate (2R)-2-phosphoglycerate. The active-site Proton acceptor is the K332.

It belongs to the enolase family. It depends on Mg(2+) as a cofactor.

It localises to the cytoplasm. Its subcellular location is the secreted. The protein localises to the cell surface. It catalyses the reaction (2R)-2-phosphoglycerate = phosphoenolpyruvate + H2O. It participates in carbohydrate degradation; glycolysis; pyruvate from D-glyceraldehyde 3-phosphate: step 4/5. Its function is as follows. Catalyzes the reversible conversion of 2-phosphoglycerate (2-PG) into phosphoenolpyruvate (PEP). It is essential for the degradation of carbohydrates via glycolysis. This Campylobacter jejuni subsp. jejuni serotype O:6 (strain 81116 / NCTC 11828) protein is Enolase.